The primary structure comprises 892 residues: DNA mismatch repair protein MutS (892 aa).

634 to 641 (GPNMGGKS) serves as a coordination point for ATP.

The protein belongs to the DNA mismatch repair MutS family.

Its function is as follows. This protein is involved in the repair of mismatches in DNA. It is possible that it carries out the mismatch recognition step. This protein has a weak ATPase activity. The sequence is that of DNA mismatch repair protein MutS from Paraburkholderia phymatum (strain DSM 17167 / CIP 108236 / LMG 21445 / STM815) (Burkholderia phymatum).